The chain runs to 595 residues: NADH-quinone oxidoreductase subunit C/D (595 aa).

Residues M1 to Q186 are NADH dehydrogenase I subunit C. The segment at D210–R595 is NADH dehydrogenase I subunit D.

In the N-terminal section; belongs to the complex I 30 kDa subunit family. This sequence in the C-terminal section; belongs to the complex I 49 kDa subunit family. In terms of assembly, NDH-1 is composed of 13 different subunits. Subunits NuoB, CD, E, F, and G constitute the peripheral sector of the complex.

The protein localises to the cell inner membrane. It carries out the reaction a quinone + NADH + 5 H(+)(in) = a quinol + NAD(+) + 4 H(+)(out). In terms of biological role, NDH-1 shuttles electrons from NADH, via FMN and iron-sulfur (Fe-S) centers, to quinones in the respiratory chain. The immediate electron acceptor for the enzyme in this species is believed to be ubiquinone. Couples the redox reaction to proton translocation (for every two electrons transferred, four hydrogen ions are translocated across the cytoplasmic membrane), and thus conserves the redox energy in a proton gradient. The sequence is that of NADH-quinone oxidoreductase subunit C/D from Acinetobacter baylyi (strain ATCC 33305 / BD413 / ADP1).